We begin with the raw amino-acid sequence, 215 residues long: Ribonuclease T (215 aa).

The 175-residue stretch at 20 to 194 folds into the Exonuclease domain; sequence VVIDVETAGF…YDTERTAVLF (175 aa). The Mg(2+) site is built by Asp23, Glu25, His181, and Asp186. His181 (proton donor/acceptor) is an active-site residue.

This sequence belongs to the RNase T family. As to quaternary structure, homodimer. The cofactor is Mg(2+).

Functionally, trims short 3' overhangs of a variety of RNA species, leaving a one or two nucleotide 3' overhang. Responsible for the end-turnover of tRNA: specifically removes the terminal AMP residue from uncharged tRNA (tRNA-C-C-A). Also appears to be involved in tRNA biosynthesis, especially in strains lacking other exoribonucleases. A general regulator of small RNAs (sRNA), contributes to their degradation. Upon overexpression suppresses sRNA-mediated RhyB-silencing of multiple RNA targets; overexpression leads to nearly complete loss of RhyB sRNA. In Escherichia coli (strain K12), this protein is Ribonuclease T.